Consider the following 123-residue polypeptide: UPF0102 protein CLM_2733 (123 aa).

This sequence belongs to the UPF0102 family.

The polypeptide is UPF0102 protein CLM_2733 (Clostridium botulinum (strain Kyoto / Type A2)).